The sequence spans 449 residues: Biotin carboxylase (449 aa).

A Biotin carboxylation domain is found at 1–445 (MLDKIVIANR…NIHYLEKKLG (445 aa)). ATP is bound by residues K116, K159, 165–166 (GG), 201–204 (EKYL), H209, and H236. The region spanning 120-317 (IAAMKKAGVP…LIKEQLRIAA (198 aa)) is the ATP-grasp domain. K238 is a hydrogencarbonate binding site. Residues E276 and E288 each coordinate ATP. The Mg(2+) site is built by E276, E288, and N290. Positions 276, 288, and 290 each coordinate Mn(2+). Hydrogencarbonate is bound by residues R292, V295, and R338. R292 is a catalytic residue. Biotin is bound at residue R338.

Acetyl-CoA carboxylase is a heterohexamer of biotin carboxyl carrier protein, biotin carboxylase and the two subunits of carboxyl transferase in a 2:2 complex. The cofactor is Mg(2+). It depends on Mn(2+) as a cofactor.

The catalysed reaction is N(6)-biotinyl-L-lysyl-[protein] + hydrogencarbonate + ATP = N(6)-carboxybiotinyl-L-lysyl-[protein] + ADP + phosphate + H(+). It participates in lipid metabolism; malonyl-CoA biosynthesis; malonyl-CoA from acetyl-CoA: step 1/1. Its function is as follows. This protein is a component of the acetyl coenzyme A carboxylase complex; first, biotin carboxylase catalyzes the carboxylation of the carrier protein and then the transcarboxylase transfers the carboxyl group to form malonyl-CoA. The polypeptide is Biotin carboxylase (accC) (Escherichia coli O157:H7).